Here is a 263-residue protein sequence, read N- to C-terminus: MVQTVYKNSDQTVFEDAKALFQLNKNILLKGPTGSGKTKLAETLSHVMNLPMHQVNCSVDLDTESLLGFKTIQTNEEGHQEIVFIDGPVIKAMKEGHILYIDEINMAKPETLPILNGVLDYRRQLTNPYTGEVIKAAPGFNVIAAINEGYVGTLPMNEALKNRFIVIEVDYIDGDILKTVIKEQSKLQDEQLIQHIIKFNEDLRTMTKQGQISEEAASIRALIDLSDLATVMPIERAVQRTIIDKLEDEREQQAILNAIELNF.

31 to 38 serves as a coordination point for ATP; sequence GPTGSGKT.

This sequence belongs to the CbbQ/NirQ/NorQ/GpvN family.

This is an uncharacterized protein from Staphylococcus epidermidis (strain ATCC 35984 / DSM 28319 / BCRC 17069 / CCUG 31568 / BM 3577 / RP62A).